The chain runs to 394 residues: uncharacterized protein (394 aa).

Helical transmembrane passes span 31-51 (LAIL…LSGL) and 57-77 (LIIA…SLLI).

This sequence belongs to the chlamydial CPn_0129/CT_036/TC_0306 family.

Its subcellular location is the cell membrane. This is an uncharacterized protein from Chlamydia pneumoniae (Chlamydophila pneumoniae).